Consider the following 327-residue polypeptide: Aspartate--ammonia ligase (327 aa).

Belongs to the class-II aminoacyl-tRNA synthetase family. AsnA subfamily.

The protein localises to the cytoplasm. It catalyses the reaction L-aspartate + NH4(+) + ATP = L-asparagine + AMP + diphosphate + H(+). The protein operates within amino-acid biosynthesis; L-asparagine biosynthesis; L-asparagine from L-aspartate (ammonia route): step 1/1. The polypeptide is Aspartate--ammonia ligase (Mycoplasmoides gallisepticum (strain R(low / passage 15 / clone 2)) (Mycoplasma gallisepticum)).